The primary structure comprises 397 residues: UDP-galactose translocator (397 aa).

Positions 1 to 21 are disordered; sequence MAAVGSGGSNAAAGPGAVSAG. Helical transmembrane passes span 3 to 23, 37 to 57, 65 to 85, 97 to 117, 140 to 160, 169 to 189, 200 to 220, 238 to 258, 269 to 289, and 315 to 335; these read AVGS…AGSL, YISL…IRYA, FFAT…CLLL, LALF…KLAV, TFQV…VLML, WASL…QAGG, GAGL…GVYF, LGLF…GTAV, PAVW…AVVV, and LFGF…IGAV. The span at 9–21 shows a compositional bias: low complexity; the sequence is SNAAAGPGAVSAG. A disordered region spans residues 355 to 397; it reads ASASTSGPCTHQQPPGQPPPPKLSSHRADLSTEPFLPKSVLVK.

The protein belongs to the nucleotide-sugar transporter family. SLC35A subfamily. As to quaternary structure, interacts with SLC35A3; the interaction is reduced in the presence of SLC35A4. Found in a complex with SLC35A3 and SLC35A4.

Its subcellular location is the golgi apparatus membrane. The enzyme catalyses UMP(out) + UDP-alpha-D-galactose(in) = UMP(in) + UDP-alpha-D-galactose(out). The catalysed reaction is UDP-N-acetyl-alpha-D-galactosamine(in) + UMP(out) = UDP-N-acetyl-alpha-D-galactosamine(out) + UMP(in). It catalyses the reaction UMP(out) + UDP-alpha-D-glucose(in) = UMP(in) + UDP-alpha-D-glucose(out). It carries out the reaction UMP(out) + UDP-N-acetyl-alpha-D-glucosamine(in) = UMP(in) + UDP-N-acetyl-alpha-D-glucosamine(out). The enzyme catalyses UDP-alpha-D-galactose(in) + AMP(out) = UDP-alpha-D-galactose(out) + AMP(in). The catalysed reaction is UDP-alpha-D-galactose(in) + CMP(out) = UDP-alpha-D-galactose(out) + CMP(in). It catalyses the reaction UDP-N-acetyl-alpha-D-galactosamine(out) + UDP-alpha-D-galactose(in) = UDP-N-acetyl-alpha-D-galactosamine(in) + UDP-alpha-D-galactose(out). It carries out the reaction UDP-N-acetyl-alpha-D-glucosamine(out) + UDP-alpha-D-galactose(in) = UDP-N-acetyl-alpha-D-glucosamine(in) + UDP-alpha-D-galactose(out). The enzyme catalyses UDP-alpha-D-galactose(in) + UDP-alpha-D-glucose(out) = UDP-alpha-D-galactose(out) + UDP-alpha-D-glucose(in). The catalysed reaction is UMP(out) + CMP(in) = UMP(in) + CMP(out). It catalyses the reaction UMP(out) + AMP(in) = UMP(in) + AMP(out). Its function is as follows. Transports uridine diphosphate galactose (UDP-galactose) from the cytosol into the Golgi apparatus, functioning as an antiporter that exchanges UDP-galactose for UMP. It is also able to exchange UDP-galactose for AMP and CMP, and to transport UDP-N-acetylgalactosamine (UDP-GalNAc) and other nucleotide sugars. As a provider of UDP-galactose to galactosyltransferases present in the Golgi apparatus, it is necessary for globotriaosylceramide/globoside (Gb3Cer) synthesis from lactosylceramide. The polypeptide is UDP-galactose translocator (Canis lupus familiaris (Dog)).